Consider the following 267-residue polypeptide: MTEYNWNERHIITFPEETLALATKDLHVYYGAKEAIKGIDMQFEKYKITALIGPSGCGKSTYLRSLNRMNDTIDIARVTGEILYQGIDVNRKDMNVYEIRKHLGMVFQRPNPFAKSIYKNITFAHERAGVKDKKVLDEIVETSLKQAALWDQVKDDLHKSAFTLSGGQQQRLCIARAISVKPDILLMDEPASALDPIATMQLEETMFELKKNYTIIIVTHNMQQAARASDYTAFFYLGNLIEYDKTRNIFQNAQCQSTNDYVSGHFG.

The 242-residue stretch at 21 to 262 (LATKDLHVYY…AQCQSTNDYV (242 aa)) folds into the ABC transporter domain. 53 to 60 (GPSGCGKS) serves as a coordination point for ATP.

This sequence belongs to the ABC transporter superfamily. Phosphate importer (TC 3.A.1.7) family. In terms of assembly, the complex is composed of two ATP-binding proteins (PstB), two transmembrane proteins (PstC and PstA) and a solute-binding protein (PstS).

It is found in the cell membrane. It carries out the reaction phosphate(out) + ATP + H2O = ADP + 2 phosphate(in) + H(+). Part of the ABC transporter complex PstSACB involved in phosphate import. Responsible for energy coupling to the transport system. This Streptococcus pyogenes serotype M18 (strain MGAS8232) protein is Phosphate import ATP-binding protein PstB 2.